The primary structure comprises 463 residues: Glycogen synthase (463 aa).

Lys15 provides a ligand contact to ADP-alpha-D-glucose.

It belongs to the glycosyltransferase 1 family. Bacterial/plant glycogen synthase subfamily.

The catalysed reaction is [(1-&gt;4)-alpha-D-glucosyl](n) + ADP-alpha-D-glucose = [(1-&gt;4)-alpha-D-glucosyl](n+1) + ADP + H(+). The protein operates within glycan biosynthesis; glycogen biosynthesis. Its function is as follows. Synthesizes alpha-1,4-glucan chains using ADP-glucose. The protein is Glycogen synthase of Aquifex aeolicus (strain VF5).